Consider the following 363-residue polypeptide: Small ribosomal subunit biogenesis GTPase RsgA (363 aa).

The CP-type G domain occupies histidine 112–leucine 268. GTP is bound by residues threonine 157–aspartate 160 and glycine 210–threonine 218. Positions 291, 296, 298, and 304 each coordinate Zn(2+). The segment at arginine 340–arginine 363 is disordered.

The protein belongs to the TRAFAC class YlqF/YawG GTPase family. RsgA subfamily. As to quaternary structure, monomer. Associates with 30S ribosomal subunit, binds 16S rRNA. It depends on Zn(2+) as a cofactor.

Its subcellular location is the cytoplasm. Its function is as follows. One of several proteins that assist in the late maturation steps of the functional core of the 30S ribosomal subunit. Helps release RbfA from mature subunits. May play a role in the assembly of ribosomal proteins into the subunit. Circularly permuted GTPase that catalyzes slow GTP hydrolysis, GTPase activity is stimulated by the 30S ribosomal subunit. This chain is Small ribosomal subunit biogenesis GTPase RsgA, found in Xanthomonas oryzae pv. oryzae (strain MAFF 311018).